The sequence spans 191 residues: Calcium and integrin-binding protein 1 (191 aa).

Gly2 is lipidated: N-myristoyl glycine. 2 consecutive EF-hand domains span residues 103 to 138 (TPDI…LTGE) and 148 to 183 (EMKQ…SPDF). Ca(2+)-binding residues include Asp116, Asp118, Asp120, Thr122, Asp127, Asp161, Asp163, Asp165, Thr167, and Glu172.

As to quaternary structure, monomer. Interacts with the heterodimeric integrin alpha-IIb/beta3 (ITGA2B-ITGB3). Interacts with ITGA2B (via cytoplasmic domain); the interaction is direct and calcium-dependent. Interacts with the protein kinases PLK2/SNK and PRKDC (via the region immediately upstream of the kinase domain). Interacts with PLK3; the interaction inhibits PLK3 kinase activity. Interacts with PSEN2. Interacts (via C-terminus) with F8. Interacts with NBR1 (via C-terminus). Interacts with FEZ1 (via C-terminus). Interacts with UBR5 (via C-terminus); the interaction is sensitive to DNA damage, and may target CIB1 for ubiquitin-mediated degradation. Interacts with IFI6; the interaction is direct. Interacts with BCL2. Interacts with ITPR3; the interaction occurs in a calcium dependent manner. Interacts with PTK2/FAK1. Interacts with MAP3K5; the interaction inhibits MAP3K5 activation by phosphorylation, and its subsequent interaction with TRAF2. Interacts (via C-terminal region) with STMN2 (via the N-terminal region); the interaction is direct, occurs in a calcium-dependent manner and attenuates the STMN2-induced neurite outgrowth inhibition. Interacts with SPHK1, the interaction occurs in a calcium-dependent manner. Interacts with ITGA2B (via C-terminal cytoplasmic tail); the interaction occurs upon platelet aggregation and is stabilized/increased in a calcium and magnesium-dependent manner. Interacts with PAK1 (via N-terminal region); the interaction is direct and occurs in a calcium-dependent manner. Interacts with RAC3 (via C-terminal region); the interaction induces their association with the cytoskeleton upon alpha-IIb/beta3 integrin-mediated adhesion. Interacts with ITGA5 and ITGAV. Interacts with MYO1C. Interacts with ITGA2B (via C-terminal cytoplasmic tail region). Interacts (via C-terminal region) with PPP3R1; the interaction increases upon cardiomyocytes hypertrophy. Interacts with CACNA1C; the interaction increases upon cardiomyocytes hypertrophy. Interacts with TAS1R2 (via C-terminus); this interaction is independent of the myristoylation state of CIB1. Interacts and forms a complex with TMC6 and TMC8; the interaction stabilizes each component of the complex. As to expression, expressed in cardiomyocytes and neurons (at protein level). Expressed during early neural development.

The protein localises to the membrane. Its subcellular location is the cell membrane. It localises to the sarcolemma. It is found in the apical cell membrane. The protein resides in the cell projection. The protein localises to the ruffle membrane. Its subcellular location is the filopodium tip. It localises to the growth cone. It is found in the lamellipodium. The protein resides in the cytoplasm. The protein localises to the cytoskeleton. Its subcellular location is the microtubule organizing center. It localises to the centrosome. It is found in the perinuclear region. The protein resides in the nucleus. The protein localises to the neuron projection. Its subcellular location is the perikaryon. Calcium-binding protein that plays a role in the regulation of numerous cellular processes, such as cell differentiation, cell division, cell proliferation, cell migration, thrombosis, angiogenesis, cardiac hypertrophy and apoptosis. Involved in bone marrow megakaryocyte differentiation by negatively regulating thrombopoietin-mediated signaling pathway. Participates in the endomitotic cell cycle of megakaryocyte, a form of mitosis in which both karyokinesis and cytokinesis are interrupted. Plays a role in integrin signaling by negatively regulating alpha-IIb/beta3 activation in thrombin-stimulated megakaryocytes preventing platelet aggregation. Up-regulates PTK2/FAK1 activity, and is also needed for the recruitment of PTK2/FAK1 to focal adhesions; it thus appears to play an important role in focal adhesion formation. Positively regulates cell migration on fibronectin in a CDC42-dependent manner, the effect being negatively regulated by PAK1. Functions as a negative regulator of stress activated MAP kinase (MAPK) signaling pathways. Down-regulates inositol 1,4,5-trisphosphate receptor-dependent calcium signaling. Involved in sphingosine kinase SPHK1 translocation to the plasma membrane in a N-myristoylation-dependent manner preventing TNF-alpha-induced apoptosis. Regulates serine/threonine-protein kinase PLK3 activity for proper completion of cell division progression. Plays a role in microtubule (MT) dynamics during neuronal development; disrupts the MT depolymerization activity of STMN2 attenuating NGF-induced neurite outgrowth and the MT reorganization at the edge of lamellipodia. Promotes cardiomyocyte hypertrophy via activation of the calcineurin/NFAT signaling pathway. Stimulates calcineurin PPP3R1 activity by mediating its anchoring to the sarcolemma. In ischemia-induced (pathological or adaptive) angiogenesis, stimulates endothelial cell proliferation, migration and microvessel formation by activating the PAK1 and ERK1/ERK2 signaling pathway. Also promotes cancer cell survival and proliferation. May regulate cell cycle and differentiation of spermatogenic germ cells, and/or differentiation of supporting Sertoli cells. Forms a complex with TMC6/EVER1 and TMC8/EVER2 in lymphocytes and keratynocytes where CIB1 stabilizes TMC6 and TMC8 levels and reciprocally. The protein is Calcium and integrin-binding protein 1 (Cib1) of Rattus norvegicus (Rat).